Consider the following 310-residue polypeptide: Phosphoribosylaminoimidazole-succinocarboxamide synthase (310 aa).

It belongs to the SAICAR synthetase family.

It carries out the reaction 5-amino-1-(5-phospho-D-ribosyl)imidazole-4-carboxylate + L-aspartate + ATP = (2S)-2-[5-amino-1-(5-phospho-beta-D-ribosyl)imidazole-4-carboxamido]succinate + ADP + phosphate + 2 H(+). It participates in purine metabolism; IMP biosynthesis via de novo pathway; 5-amino-1-(5-phospho-D-ribosyl)imidazole-4-carboxamide from 5-amino-1-(5-phospho-D-ribosyl)imidazole-4-carboxylate: step 1/2. The chain is Phosphoribosylaminoimidazole-succinocarboxamide synthase from Cytophaga hutchinsonii (strain ATCC 33406 / DSM 1761 / CIP 103989 / NBRC 15051 / NCIMB 9469 / D465).